The primary structure comprises 97 residues: MSTPQIDVAYIAKLARIDLTEEETALFSKDLDKVLAYITKLESYDVTGIAPMNHPLPAMDVMREDIPETGFTQEEALSNAPQQSQGQFRTPKVVESA.

The tract at residues 68–97 (ETGFTQEEALSNAPQQSQGQFRTPKVVESA) is disordered. The span at 70–88 (GFTQEEALSNAPQQSQGQF) shows a compositional bias: polar residues.

The protein belongs to the GatC family. Heterotrimer of A, B and C subunits.

It catalyses the reaction L-glutamyl-tRNA(Gln) + L-glutamine + ATP + H2O = L-glutaminyl-tRNA(Gln) + L-glutamate + ADP + phosphate + H(+). The enzyme catalyses L-aspartyl-tRNA(Asn) + L-glutamine + ATP + H2O = L-asparaginyl-tRNA(Asn) + L-glutamate + ADP + phosphate + 2 H(+). Its function is as follows. Allows the formation of correctly charged Asn-tRNA(Asn) or Gln-tRNA(Gln) through the transamidation of misacylated Asp-tRNA(Asn) or Glu-tRNA(Gln) in organisms which lack either or both of asparaginyl-tRNA or glutaminyl-tRNA synthetases. The reaction takes place in the presence of glutamine and ATP through an activated phospho-Asp-tRNA(Asn) or phospho-Glu-tRNA(Gln). This is Aspartyl/glutamyl-tRNA(Asn/Gln) amidotransferase subunit C from Akkermansia muciniphila (strain ATCC BAA-835 / DSM 22959 / JCM 33894 / BCRC 81048 / CCUG 64013 / CIP 107961 / Muc).